A 246-amino-acid polypeptide reads, in one-letter code: MAAAAIPALLLCLPLLFLLFGWSRARRDDPHSLCYDITVIPKFRPGPRWCAVQGQVDEKTFLHYDCGNKTVTPVSPLGKKLNVTMAWKAQNPVLREVVDILTEQLLDIQLENYTPKEPLTLQARMSCEQKAEGHSSGSWQFSIDGQTFLLFDSEKRMWTTVHPGARKMKEKWENDKDVAMSFHYISMGDCIGWLEDFLMGMDSTLEPSAGAPLAMSSGTTQLRATATTLILCCLLIILPCFILPGI.

An N-terminal signal peptide occupies residues 1-25 (MAAAAIPALLLCLPLLFLLFGWSRA). Residues 29-117 (DPHSLCYDIT…IQLENYTPKE (89 aa)) are MHC class I alpha-1 like. A disulfide bond links Cys-50 and Cys-66. Residues Asn-68 and Asn-82 are each glycosylated (N-linked (GlcNAc...) asparagine). The segment at 118 to 210 (PLTLQARMSC…MDSTLEPSAG (93 aa)) is MHC class I alpha-2 like. A disulfide bond links Cys-127 and Cys-190. Gly-218 carries GPI-anchor amidated glycine lipidation. A propeptide spans 219–246 (TTQLRATATTLILCCLLIILPCFILPGI) (removed in mature form).

The protein belongs to the MHC class I family. As to quaternary structure, interacts with KLRK1/NKG2D. (Microbial infection) In CMV-infected cells, interacts with the viral glycoprotein UL16; this interaction causes relocalization from the cell surface to the cytoplasm and prevents binding to and activation of KLRK1/NKG2D, providing CMV with an immune evasion mechanism. As to expression, widely expressed. Expressed in trachea. Constitutively expressed in peripheral blood mononuclear cells, including B-cells and natural killer cells, as well as CD4+ and CD8+ T-cells and monocytes. Tends to be up-regulated in various lymphoid malignancies, including chronic lymphocytic leukemia.

It localises to the cell membrane. The protein resides in the endoplasmic reticulum. Functionally, binds and activates the KLRK1/NKG2D receptor, mediating natural killer cell cytotoxicity. This chain is UL16-binding protein 6 (RAET1L), found in Homo sapiens (Human).